The following is a 160-amino-acid chain: Endoribonuclease YbeY (160 aa).

Residues H127, H131, and H137 each contribute to the Zn(2+) site.

Belongs to the endoribonuclease YbeY family. Requires Zn(2+) as cofactor.

The protein resides in the cytoplasm. Its function is as follows. Single strand-specific metallo-endoribonuclease involved in late-stage 70S ribosome quality control and in maturation of the 3' terminus of the 16S rRNA. The sequence is that of Endoribonuclease YbeY from Synechococcus sp. (strain RCC307).